Reading from the N-terminus, the 441-residue chain is Maltose-6'-phosphate glucosidase (441 aa).

4-70 (FSILIAGGGS…PQIKFSYSTN (67 aa)) is an NAD(+) binding site. Residues Arg93 and Asn147 each coordinate substrate. Cys169 lines the Mn(2+) pocket. Asp170 functions as the Proton donor in the catalytic mechanism. A Mn(2+)-binding site is contributed by His200. Catalysis depends on Tyr264, which acts as the Proton acceptor. Arg284 is a substrate binding site.

This sequence belongs to the glycosyl hydrolase 4 family. As to quaternary structure, homotetramer. It depends on NAD(+) as a cofactor. Requires Mn(2+) as cofactor. Fe(2+) is required as a cofactor. Co(2+) serves as cofactor. The cofactor is Ni(2+).

The catalysed reaction is alpha-maltose 6'-phosphate + H2O = D-glucose 6-phosphate + D-glucose. It participates in glycan degradation; maltose degradation. Functionally, hydrolyzes a wide variety of 6-phospho-alpha-D-glucosides including maltose-6'P, trehalose-6P and the 6'-phosphorylated derivatives of the five linkage-isomeric alpha-D-glucosyl-D-fructoses: trehalulose-6'P, turanose-6'P, maltulose-6'P, leucrose-6'P, and palatinose-6'P. However, sucrose-6P is not a substrate for MalH, and this enzyme also fails to hydrolyze beta-O-linked phosphorylated disaccharides such as cellobiose-6'P and gentobiose-6'P. The sequence is that of Maltose-6'-phosphate glucosidase (malH) from Fusobacterium mortiferum.